A 696-amino-acid polypeptide reads, in one-letter code: Mitosis initiation protein fs(1)Ya (696 aa).

Disordered regions lie at residues 245–285 (NAST…RAWK), 336–379 (EHSS…YSTS), and 457–492 (IKFE…TPEI). 2 stretches are compositionally biased toward low complexity: residues 270 to 281 (QQQQQQQQPLQQ) and 361 to 379 (SESS…YSTS). The interval 448-696 (TGAGINKKQI…REPIERMRRQ (249 aa)) is rich in charged AA. Residues threonine 478, threonine 484, and threonine 489 each carry the phosphothreonine modification. Short sequence motifs (nuclear localization signal) lie at residues 512 to 520 (PKKDKPKEK) and 534 to 538 (QPRVR). Disordered regions lie at residues 555–586 (DVGE…KLEA) and 603–696 (PASL…MRRQ). The span at 557 to 569 (GEPEVVDAEEEDE) shows a compositional bias: acidic residues. 2 stretches are compositionally biased toward basic and acidic residues: residues 607–624 (RGER…DKEN) and 685–696 (RPREPIERMRRQ).

Its subcellular location is the nucleus envelope. It is found in the nucleus. The protein resides in the nucleoplasm. It localises to the cytoplasm. Functionally, cell cycle-dependent nuclear envelope component required for embryonic mitosis. The chain is Mitosis initiation protein fs(1)Ya (fs(1)Ya) from Drosophila melanogaster (Fruit fly).